We begin with the raw amino-acid sequence, 1141 residues long: LRR receptor-like serine/threonine-protein kinase RGI1 (1141 aa).

The N-terminal stretch at 1–33 (MSLHSLIFFSSSSSSLLFSFFFIFIFCFSLSDA) is a signal peptide. Over 34–726 (EQNPEASILY…DASRTRKLRL (693 aa)) the chain is Extracellular. A disulfide bridge links Cys-69 with Cys-77. N-linked (GlcNAc...) asparagine glycosylation occurs at Asn-71. 25 LRR repeats span residues 80–104 (QGFI…LPAF), 105–128 (RSLQ…LGDC), 130–152 (GLKV…LSKL), 153–176 (RNLE…ISKC), 178–200 (KLKS…LGKL), 202–225 (GLEV…IGDC), 226–249 (SNLT…LGKL), 250–273 (KKLE…LGNC), 275–297 (ELVD…IGQL), 298–321 (TKLE…IGNC), 322–345 (SNLK…IGRL), 347–369 (FLEE…ISNC), 370–392 (SSLV…ELGT), 394–417 (TKLT…LADC), 418–441 (TDLQ…LFML), 443–464 (NLTK…EIGN), 465–489 (CSSL…IGSL), 490–513 (KKIN…IGSC), 514–537 (SELQ…VSSL), 538–561 (SGLQ…LGRL), 563–585 (SLNK…LGMC), 586–609 (SGLQ…LGDI), 610–634 (ENLE…IASL), 636–657 (KLSI…LANI), and 658–682 (ENLV…LFRQ). Asn-116 carries an N-linked (GlcNAc...) asparagine glycan. 2 short sequence motifs (small peptide recognition) span residues 185–186 (FD) and 207–210 (RIGG). Asn-227 carries an N-linked (GlcNAc...) asparagine glycan. 2 consecutive short sequence motifs (small peptide recognition) follow at residues 230–235 (VLGLAE) and Tyr-258. Asn-272 carries an N-linked (GlcNAc...) asparagine glycan. The short motif at 280–282 (FLY) is the Small peptide recognition element. Asn-320 carries N-linked (GlcNAc...) asparagine glycosylation. 2 consecutive short sequence motifs (small peptide recognition) follow at residues 328–331 (DLSL) and 350–352 (EFM). N-linked (GlcNAc...) asparagine glycosylation is present at Asn-368. 2 short sequence motifs (small peptide recognition) span residues 398-402 (LFFAW) and 424-427 (DLSR). An N-linked (GlcNAc...) asparagine glycan is attached at Asn-443. A Small peptide recognition motif is present at residues 446 to 450 (KLLLI). Asn-464 carries an N-linked (GlcNAc...) asparagine glycan. A Small peptide recognition motif is present at residues 470–472 (RLR). Residue Asn-523 is glycosylated (N-linked (GlcNAc...) asparagine). Asn-617 carries N-linked (GlcNAc...) asparagine glycosylation. An N-linked (GlcNAc...) asparagine glycan is attached at Asn-664. A helical membrane pass occupies residues 727 to 747 (TLALLITLTVVLMILGAVAVI). The Cytoplasmic portion of the chain corresponds to 748 to 1141 (RARRNIDNER…LLYSSSSSIE (394 aa)). The 289-residue stretch at 786–1074 (LVEPNVIGKG…EIKQEREEYA (289 aa)) folds into the Protein kinase domain. Residues 792–800 (IGKGCSGVV) and Lys-814 each bind ATP. Tyr-868 and Tyr-906 each carry phosphotyrosine. Asp-919 serves as the catalytic Proton acceptor. Phosphotyrosine occurs at positions 962 and 969.

The protein belongs to the protein kinase superfamily. Ser/Thr protein kinase family. Interacts with beet curly top virus AL4/C4. Binds to RGF peptides such as RGF1, GLV5/CLEL1/RGF2, GLV7/CLEL3/RGF3, GLV3/RGF4, GLV10/CLEL7/RGF5 and RGF10/CLELN; these interactions trigger the formation of heterodimers with SERK1, SERK2 or BAK1/SERK3 via LRR regions. Interacts with UBP13. Phosphorylated and ubiquitinated upon interaction with RGF1, thus leading to activation a subsequent degradation. Stabilized by UBP12 and UBP13-mediated deubiquitination. In terms of processing, autophosphorylated. As to expression, expressed in roots.

Its subcellular location is the cell membrane. It catalyses the reaction L-seryl-[protein] + ATP = O-phospho-L-seryl-[protein] + ADP + H(+). The catalysed reaction is L-threonyl-[protein] + ATP = O-phospho-L-threonyl-[protein] + ADP + H(+). In terms of biological role, together with RGI2, RGI3, RGI4 and RGI5, acts as a receptor of RGF peptides (e.g. RGF1, GLV5/CLEL1/RGF2, GLV7/CLEL3/RGF3, GLV3/RGF4, GLV10/CLEL7/RGF5 and RGF10/CLELN), peptide hormones which maintain the postembryonic root stem cell niche by regulating the expression levels and patterns of the transcription factor PLETHORA (PLT, e.g. PLT1 and PLT2). Links RGF peptides signal with their downstream components. The chain is LRR receptor-like serine/threonine-protein kinase RGI1 from Arabidopsis thaliana (Mouse-ear cress).